We begin with the raw amino-acid sequence, 72 residues long: Translation initiation factor IF-1 1 (72 aa).

The S1-like domain occupies methionine 1–lysine 72.

The protein belongs to the IF-1 family. In terms of assembly, component of the 30S ribosomal translation pre-initiation complex which assembles on the 30S ribosome in the order IF-2 and IF-3, IF-1 and N-formylmethionyl-tRNA(fMet); mRNA recruitment can occur at any time during PIC assembly.

The protein resides in the cytoplasm. Its function is as follows. One of the essential components for the initiation of protein synthesis. Stabilizes the binding of IF-2 and IF-3 on the 30S subunit to which N-formylmethionyl-tRNA(fMet) subsequently binds. Helps modulate mRNA selection, yielding the 30S pre-initiation complex (PIC). Upon addition of the 50S ribosomal subunit IF-1, IF-2 and IF-3 are released leaving the mature 70S translation initiation complex. The chain is Translation initiation factor IF-1 1 from Ralstonia nicotianae (strain ATCC BAA-1114 / GMI1000) (Ralstonia solanacearum).